A 100-amino-acid polypeptide reads, in one-letter code: Small ribosomal subunit protein uS14 (100 aa).

This sequence belongs to the universal ribosomal protein uS14 family. Part of the 30S ribosomal subunit. Contacts proteins S3 and S10.

Binds 16S rRNA, required for the assembly of 30S particles and may also be responsible for determining the conformation of the 16S rRNA at the A site. This is Small ribosomal subunit protein uS14 from Prochlorococcus marinus (strain AS9601).